Consider the following 376-residue polypeptide: MDIYKFAISPLLFNVVKTDPEWLHQQTIRSFSWLSQTPTSWANQRLQKSLSLYDSHLEQKLFGLNFPNPVGLAAGFDKDGVAAGIWSNLGFGFAELGTVTFHAQPGNPRPRLFRLPLDKAALNRMGFNNLGAAAMATRLVQEKQESTNLIPIGINLGKSKVTPLEEAAQDYLDSFRLLKDLGDYFVVNVSSPNTPGLRSLQDASMLSAILNLLQQENTTHKPIFVKIAPDLDWVAIAEIISLAKTYNLAGIIATNTTIRRDGLKTQVINQTGKSPQEEAGGISGEPLRDRSTEVIRFIWQQTQGEIPIIGVGGIFSPEDAWEKITAGASLIQVYTGWIYEGPLMVRRILEGLLSKLEQNGFNSIREAVGLEIKSKK.

FMN contacts are provided by residues 74 to 78 and threonine 98; that span reads AGFDK. Lysine 78 serves as a coordination point for substrate. Substrate is bound at residue 123-127; it reads NRMGF. 2 residues coordinate FMN: asparagine 155 and asparagine 188. Residue asparagine 188 coordinates substrate. The active-site Nucleophile is serine 191. Asparagine 193 is a binding site for substrate. FMN contacts are provided by lysine 226 and threonine 254. 255–256 lines the substrate pocket; that stretch reads NT. Residues glycine 284, glycine 313, and 334–335 each bind FMN; that span reads YT.

Belongs to the dihydroorotate dehydrogenase family. Type 2 subfamily. In terms of assembly, monomer. FMN serves as cofactor.

It is found in the cell membrane. It carries out the reaction (S)-dihydroorotate + a quinone = orotate + a quinol. Its pathway is pyrimidine metabolism; UMP biosynthesis via de novo pathway; orotate from (S)-dihydroorotate (quinone route): step 1/1. Catalyzes the conversion of dihydroorotate to orotate with quinone as electron acceptor. The polypeptide is Dihydroorotate dehydrogenase (quinone) (Nostoc punctiforme (strain ATCC 29133 / PCC 73102)).